Reading from the N-terminus, the 689-residue chain is Protein-glutamine gamma-glutamyltransferase 2 (689 aa).

Catalysis depends on residues Cys-278, His-336, and Asp-359. Residues Asn-399, Asp-401, Glu-437, Glu-447, and Glu-452 each contribute to the Ca(2+) site. The disordered stretch occupies residues 427 to 453 (STKSVGRDSREDITHTYKYPEGSEKER). Residues 431–441 (VGRDSREDITH) are compositionally biased toward basic and acidic residues. Position 476 to 483 (476 to 483 (RIKLSEGA)) interacts with GTP. Glu-539 contacts Ca(2+). Residue 580 to 583 (RDVY) participates in GTP binding.

Belongs to the transglutaminase superfamily. Transglutaminase family. Monomer. Ca(2+) is required as a cofactor. In terms of tissue distribution, predominates in mature erythrocytes. Also found in kidney and cardiac muscle.

The protein localises to the cytoplasm. The protein resides in the cytosol. It localises to the nucleus. Its subcellular location is the chromosome. It is found in the secreted. The protein localises to the extracellular space. The protein resides in the extracellular matrix. It localises to the cell membrane. Its subcellular location is the mitochondrion. The catalysed reaction is L-glutaminyl-[protein] + L-lysyl-[protein] = [protein]-L-lysyl-N(6)-5-L-glutamyl-[protein] + NH4(+). It catalyses the reaction L-glutaminyl-[protein] + serotonin = 5-serotonyl-L-glutamyl-[protein] + NH4(+). The enzyme catalyses L-glutaminyl-[protein] + dopamine = 5-dopaminyl-L-glutamyl-[protein] + NH4(+). It carries out the reaction L-glutaminyl-[protein] + histamine = 5-histaminyl-L-glutamyl-[protein] + NH4(+). The catalysed reaction is L-glutaminyl-[protein] + (R)-noradrenaline = 5-(R)-noradrenalinyl-L-glutamyl-[protein] + NH4(+). It catalyses the reaction L-glutaminyl-[protein] + H2O = L-glutamyl-[protein] + NH4(+). Acyltransferase activity is regulated by the binding of GTP and Ca(2+): inactivated by GTP, which stabilizes its closed structure, thereby obstructing the accessibility of substrates to the active sites. In contrast, Ca(2+) acts as a cofactor by inducing conformational change to the active open form. In absence of Ca(2+), Mg(2+) may bind Ca(2+)-binding sites, promoting GTP-binding and subsequent inhibition of the acyltransferase activity. In terms of biological role, calcium-dependent acyltransferase that catalyzes the formation of covalent bonds between peptide-bound glutamine and various primary amines, such as gamma-amino group of peptide-bound lysine, or mono- and polyamines, thereby producing cross-linked or aminated proteins, respectively. Involved in many biological processes, such as bone development, angiogenesis, wound healing, cellular differentiation, chromatin modification and apoptosis. Acts as a protein-glutamine gamma-glutamyltransferase by mediating the cross-linking of proteins: under physiological conditions, the protein cross-linking activity is inhibited by GTP; inhibition is relieved by Ca(2+) in response to various stresses. When secreted, catalyzes cross-linking of proteins of the extracellular matrix, resulting in the formation of scaffolds. Plays a key role during apoptosis, both by (1) promoting the cross-linking of cytoskeletal proteins resulting in condensation of the cytoplasm, and by (2) mediating cross-linking proteins of the extracellular matrix, resulting in the irreversible formation of scaffolds that stabilize the integrity of the dying cells before their clearance by phagocytosis, thereby preventing the leakage of harmful intracellular components. In addition to protein cross-linking, can use different monoamine substrates to catalyze a vast array of protein post-translational modifications: mediates aminylation of serotonin, dopamine, noradrenaline or histamine into glutamine residues of target proteins to generate protein serotonylation, dopaminylation, noradrenalinylation or histaminylation, respectively. Mediates protein serotonylation of small GTPases during activation and aggregation of platelets, leading to constitutive activation of these GTPases. Plays a key role in chromatin organization by mediating serotonylation and dopaminylation of histone H3. Catalyzes serotonylation of 'Gln-5' of histone H3 (H3Q5ser) during serotonergic neuron differentiation, thereby facilitating transcription. Acts as a mediator of neurotransmission-independent role of nuclear dopamine in ventral tegmental area (VTA) neurons: catalyzes dopaminylation of 'Gln-5' of histone H3 (H3Q5dop), thereby regulating relapse-related transcriptional plasticity in the reward system. Also acts as a protein deamidase by mediating the side chain deamidation of specific glutamine residues of proteins to glutamate. May also act as an isopeptidase cleaving the previously formed cross-links. Also able to participate in signaling pathways independently of its acyltransferase activity: acts as a signal transducer in alpha-1 adrenergic receptor-mediated stimulation of phospholipase C-delta (PLCD) activity and is required for coupling alpha-1 adrenergic agonists to the stimulation of phosphoinositide lipid metabolism. The chain is Protein-glutamine gamma-glutamyltransferase 2 from Gallus gallus (Chicken).